A 172-amino-acid polypeptide reads, in one-letter code: Dehydratase cfoI (172 aa).

Catalysis depends on residues His86 and His111.

This sequence belongs to the scytalone dehydratase family. As to quaternary structure, homotrimer. Each subunit contains an active site, located in the central part of the hydrophobic core of the monomer, which functions independently.

The protein operates within secondary metabolite biosynthesis; flavonoid biosynthesis. Cytochrome P450 monooxygenase; part of the gene cluster that mediates the biosynthesis of chlorflavonin, a fungal flavonoid with acetolactate synthase inhibitory activity. Within the pathway, cfoI is responsible for the hydroxylation of the flavonoid skeleton at position C3 with cfoF. The pathway begins with the PKS-NRPS hybrid synthetase cfoA that uses benzoic acid or p-hydroxybenzoic acid as a starter unit with four rounds of chain elongation using malonyl-CoA to form the chalcone skeleton. Then, a new type of chalcone isomerase, cfoK, catalyzes the conversion of the chalcone into a flavanone by a histidine-mediated oxa-Michael addition mechanism. The desaturation of flavanone to flavone is catalyzed by a new type of flavone synthase, the flavin mononucleotide (FMN)-dependent oxidoreductase cfoJ. Monooxygenases cfoF, cfoG, and P450 cfoH are responsible for the hydroxylation of the flavonoid skeleton at sites C3, C8, and C2', respectively. Like cfoF, the dehydratase cfoI plays also a role in the hydroxylation of position C3. Methyltransferases cfoB, cfoC, and cfoD then catalyze the methylation of C7-OH, C8-OH, and C3-OH, respectively. Finally, the monooxygenase cfoE is responsible for the chlorination of flavonoid at position C3'. The protein is Dehydratase cfoI of Aspergillus candidus.